Consider the following 253-residue polypeptide: Ribosome-inactivating protein saporin-5 (253 aa).

Residue glutamate 176 is part of the active site.

The protein belongs to the ribosome-inactivating protein family. Type 1 RIP subfamily.

The catalysed reaction is Endohydrolysis of the N-glycosidic bond at one specific adenosine on the 28S rRNA.. Ribosome-inactivating protein of type 1, inhibits protein synthesis in animal cells. The sequence is that of Ribosome-inactivating protein saporin-5 (SAP5) from Saponaria officinalis (Common soapwort).